The sequence spans 513 residues: GMP synthase [glutamine-hydrolyzing] (513 aa).

The Glutamine amidotransferase type-1 domain maps to 8-198; the sequence is KIIVLDYGSQ…ALNTCGAKGN (191 aa). Cys-85 serves as the catalytic Nucleophile. Residues His-172 and Glu-174 contribute to the active site. Residues 199–388 form the GMPS ATP-PPase domain; it reads WSMENFIDMQ…LGMPDEIVWR (190 aa). 226–232 contributes to the ATP binding site; that stretch reads SGGVDSS.

As to quaternary structure, homodimer.

It carries out the reaction XMP + L-glutamine + ATP + H2O = GMP + L-glutamate + AMP + diphosphate + 2 H(+). The protein operates within purine metabolism; GMP biosynthesis; GMP from XMP (L-Gln route): step 1/1. Functionally, catalyzes the synthesis of GMP from XMP. This Lactococcus lactis subsp. cremoris (strain SK11) protein is GMP synthase [glutamine-hydrolyzing].